A 365-amino-acid chain; its full sequence is MERGLHLGAAAASEDDLFLHKSLGASTAKRLEAAFRSTPPGMDLSLAPPPRERPASSSSSPLGCFEPADPEGAGLLLPPPGGGGGAGGGGGGGGGGGVSVPGLLVGSAGVGGDPNLSSLPAGAALCLKYGESAGRGSVAESSGGEQSPDDDSDGRCELVLRAGGADPRASPGAGGGGTKVVEGCSNAHLHGGAGLPPGGSTGSGGGGSGGGGGGGSSSKKSKEQKALRLNINARERRRMHDLNDALDELRAVIPYAHSPSVRKLSKIATLLLAKNYILMQAQALEEMRRLVAYLNQGQAISAASLPSSAAAAAAAAALHPALGAYEQAAGYPFSAGLPPAASCPEKCALFNSVSSSLCKQCTEKP.

Disordered regions lie at residues 34–93, 134–156, and 188–225; these read AFRS…GGGG, GRGS…DGRC, and HLHG…KEQK. Residues 82 to 93 show a composition bias toward gly residues; that stretch reads GGGGAGGGGGGG. The span at 191–216 shows a compositional bias: gly residues; sequence GGAGLPPGGSTGSGGGGSGGGGGGGS. The 55-residue stretch at 226–280 folds into the bHLH domain; sequence ALRLNINARERRRMHDLNDALDELRAVIPYAHSPSVRKLSKIATLLLAKNYILMQ.

Heterodimer with other bHLH proteins, like TCF3/E47. As to expression, kidney, lung, brain and pancreas (insulinoma).

It localises to the nucleus. Inhibits DNA binding of TCF3/E47 homodimers and TCF3 (E47)/NEUROD1 heterodimers and acts as a strong repressor of Neurod1 and Myod-responsive genes, probably by heterodimerization with class a basic helix-loop-helix factors. Despite the presence of an intact basic domain, does not bind to DNA. The chain is Class E basic helix-loop-helix protein 22 (BHLHE22) from Mesocricetus auratus (Golden hamster).